A 384-amino-acid polypeptide reads, in one-letter code: 8-amino-7-oxononanoate synthase (384 aa).

Arg21 lines the substrate pocket. 108-109 provides a ligand contact to pyridoxal 5'-phosphate; it reads GF. His133 is a binding site for substrate. Ser179, His207, and Thr233 together coordinate pyridoxal 5'-phosphate. N6-(pyridoxal phosphate)lysine is present on Lys236. Thr352 is a binding site for substrate.

Belongs to the class-II pyridoxal-phosphate-dependent aminotransferase family. BioF subfamily. Homodimer. It depends on pyridoxal 5'-phosphate as a cofactor.

The enzyme catalyses 6-carboxyhexanoyl-[ACP] + L-alanine + H(+) = (8S)-8-amino-7-oxononanoate + holo-[ACP] + CO2. It functions in the pathway cofactor biosynthesis; biotin biosynthesis. In terms of biological role, catalyzes the decarboxylative condensation of pimeloyl-[acyl-carrier protein] and L-alanine to produce 8-amino-7-oxononanoate (AON), [acyl-carrier protein], and carbon dioxide. The polypeptide is 8-amino-7-oxononanoate synthase (Shigella dysenteriae serotype 1 (strain Sd197)).